A 63-amino-acid polypeptide reads, in one-letter code: DNA gyrase inhibitor YacG (63 aa).

The Zn(2+) site is built by Cys-9, Cys-12, Cys-28, and Cys-32.

Belongs to the DNA gyrase inhibitor YacG family. Interacts with GyrB. Requires Zn(2+) as cofactor.

Its function is as follows. Inhibits all the catalytic activities of DNA gyrase by preventing its interaction with DNA. Acts by binding directly to the C-terminal domain of GyrB, which probably disrupts DNA binding by the gyrase. The sequence is that of DNA gyrase inhibitor YacG from Salmonella paratyphi A (strain AKU_12601).